A 141-amino-acid polypeptide reads, in one-letter code: MRQRTIVCPLIQNDGAYLLCKMADDRGVFPGQWALSGGGVEPGERIEEALRREIREELGEQLLLTEITPWTFSDDIRTKTYADGRKEEIYMIYLTFDCVSANREVKINEEFQDYAWVKPEDLVHYDLNVATRKTLRLKGLL.

Residues Met1–Leu141 enclose the Nudix hydrolase domain. Residues Gly38–Gly59 carry the Nudix box motif.

Belongs to the Nudix hydrolase family. NudI subfamily. In terms of assembly, monomer. The cofactor is Mg(2+).

It catalyses the reaction a ribonucleoside 5'-triphosphate + H2O = a ribonucleoside 5'-phosphate + diphosphate + H(+). The catalysed reaction is a 2'-deoxyribonucleoside 5'-triphosphate + H2O = a 2'-deoxyribonucleoside 5'-phosphate + diphosphate + H(+). It carries out the reaction dUTP + H2O = dUMP + diphosphate + H(+). The enzyme catalyses dTTP + H2O = dTMP + diphosphate + H(+). It catalyses the reaction dCTP + H2O = dCMP + diphosphate + H(+). Catalyzes the hydrolysis of nucleoside triphosphates, with a preference for pyrimidine deoxynucleoside triphosphates (dUTP, dTTP and dCTP). In Escherichia coli O17:K52:H18 (strain UMN026 / ExPEC), this protein is Nucleoside triphosphatase NudI.